The primary structure comprises 563 residues: Coiled-coil domain-containing protein 38 (563 aa).

A compositionally biased stretch (polar residues) spans methionine 1–serine 11. The tract at residues methionine 1–lysine 21 is disordered. The stretch at lysine 129–phenylalanine 212 forms a coiled coil. Positions glutamate 272–serine 311 are disordered. Residues aspartate 282–arginine 299 show a composition bias toward polar residues. Coiled-coil stretches lie at residues asparagine 384–leucine 415 and arginine 497–glutamine 522. Positions glutamine 522–threonine 563 are disordered. The span at proline 523 to phenylalanine 533 shows a compositional bias: basic residues.

Interacts with CCDC42, CFAP53, IFT88 and ODF2. Interacts with CCDC146. Interacts with TEKT3. Interacts with ubiquitinated histone H2A.

It is found in the cytoplasm. It localises to the cytoskeleton. The protein resides in the microtubule organizing center. The protein localises to the centrosome. Its subcellular location is the perinuclear region. It is found in the cell projection. It localises to the cilium. The protein resides in the flagellum. In terms of biological role, essential for male fertility. Required for sperm flagellum biogenesis. Also required for acrosome biogenesis. Required for the attachment of developing acrosomes to the nucleus during spermiogenesis and may be involved in the transport of fibrous sheath components. This chain is Coiled-coil domain-containing protein 38 (CCDC38), found in Homo sapiens (Human).